The primary structure comprises 610 residues: UvrABC system protein C (610 aa).

The GIY-YIG domain occupies 16 to 94 (SQPGVYRMYD…IKLYQPRYNV (79 aa)). In terms of domain architecture, UVR spans 204–239 (DQVLTQLIARMEKASQNLEFEEAARIRDQIQAVRRV).

The protein belongs to the UvrC family. Interacts with UvrB in an incision complex.

The protein resides in the cytoplasm. The UvrABC repair system catalyzes the recognition and processing of DNA lesions. UvrC both incises the 5' and 3' sides of the lesion. The N-terminal half is responsible for the 3' incision and the C-terminal half is responsible for the 5' incision. This is UvrABC system protein C from Escherichia fergusonii (strain ATCC 35469 / DSM 13698 / CCUG 18766 / IAM 14443 / JCM 21226 / LMG 7866 / NBRC 102419 / NCTC 12128 / CDC 0568-73).